A 544-amino-acid polypeptide reads, in one-letter code: Coiled-coil domain-containing protein 82 (544 aa).

Basic residues predominate over residues 1–14 (MIHVRRHETRRNSK). The tract at residues 1-294 (MIHVRRHETR…ESDEDGDDYI (294 aa)) is disordered. Over residues 16 to 27 (HVPEQKSRVDWR) the composition is skewed to basic and acidic residues. Over residues 39–67 (DSDEELDSEEFDSDEELDSDESFENDEEL) the composition is skewed to acidic residues. 5 positions are modified to phosphoserine: Ser-88, Ser-131, Ser-154, Ser-195, and Ser-219. Positions 88 to 108 (SKIQSEGNDSKCLINSGNGST) are enriched in polar residues. Positions 112–132 (ETNKIKHRNIDLQDQEKHLSQ) are enriched in basic and acidic residues. The segment covering 223-248 (MEQKTPEKTLAAQKREKLQKLKELSK) has biased composition (basic and acidic residues). Residue Thr-227 is modified to Phosphothreonine. Residues 229 to 256 (EKTLAAQKREKLQKLKELSKQRSRQRRS) adopt a coiled-coil conformation. Positions 273 to 294 (DEVDEEEEEDNYESDEDGDDYI) are enriched in acidic residues. Ser-329 carries the post-translational modification Phosphoserine.

This chain is Coiled-coil domain-containing protein 82 (CCDC82), found in Homo sapiens (Human).